Consider the following 319-residue polypeptide: Transmembrane and ubiquitin-like domain-containing protein 2 (319 aa).

The chain crosses the membrane as a helical span at residues 36–56; the sequence is VMVVAGVVVLTLALVLAWLST. 2 disordered regions span residues 88–130 and 146–165; these read VNQG…GDME and QAGLESSRPEASLGLDDSTC. Over residues 95–111 the composition is skewed to basic and acidic residues; it reads PTEHPHPSGGSDDKAEE. The region spanning 173–246 is the Ubiquitin-like domain; that stretch reads INVRLKFLND…IHCHRSPPGA (74 aa). 2 consecutive transmembrane segments (helical) span residues 264 to 284 and 293 to 313; these read LGVNVGSLMVPVFVVLLGVVW and FFTAPATVSLVGVTVFFSFLV.

The protein localises to the membrane. This Rattus norvegicus (Rat) protein is Transmembrane and ubiquitin-like domain-containing protein 2 (Tmub2).